A 257-amino-acid chain; its full sequence is Putative phosphatase YkrA (257 aa).

D9 functions as the Nucleophile in the catalytic mechanism. Residue D9 participates in Mg(2+) binding. A phosphate-binding site is contributed by I10. Residue D11 coordinates Mg(2+). Residues 43–44 (SG) and K183 contribute to the phosphate site. Position 206 (D206) interacts with Mg(2+). A phosphate-binding site is contributed by N209.

This sequence belongs to the HAD-like hydrolase superfamily. Cof family. The cofactor is Mg(2+).

This Bacillus subtilis (strain 168) protein is Putative phosphatase YkrA (ykrA).